Consider the following 65-residue polypeptide: Large ribosomal subunit protein uL30 (65 aa).

This sequence belongs to the universal ribosomal protein uL30 family. Part of the 50S ribosomal subunit.

This is Large ribosomal subunit protein uL30 from Brucella suis (strain ATCC 23445 / NCTC 10510).